The primary structure comprises 1041 residues: Isoleucine--tRNA ligase (1041 aa).

A 'HIGH' region motif is present at residues 53–63; sequence PFANGLPHYGH. The 'KMSKS' region signature appears at 619 to 623; it reads KMSKS. Position 622 (lysine 622) interacts with ATP.

It belongs to the class-I aminoacyl-tRNA synthetase family. IleS type 2 subfamily. As to quaternary structure, monomer. Requires Zn(2+) as cofactor.

It is found in the cytoplasm. The catalysed reaction is tRNA(Ile) + L-isoleucine + ATP = L-isoleucyl-tRNA(Ile) + AMP + diphosphate. In terms of biological role, catalyzes the attachment of isoleucine to tRNA(Ile). As IleRS can inadvertently accommodate and process structurally similar amino acids such as valine, to avoid such errors it has two additional distinct tRNA(Ile)-dependent editing activities. One activity is designated as 'pretransfer' editing and involves the hydrolysis of activated Val-AMP. The other activity is designated 'posttransfer' editing and involves deacylation of mischarged Val-tRNA(Ile). This Mycobacterium tuberculosis (strain CDC 1551 / Oshkosh) protein is Isoleucine--tRNA ligase (ileS).